Reading from the N-terminus, the 446-residue chain is Histidine--tRNA ligase (446 aa).

It belongs to the class-II aminoacyl-tRNA synthetase family. As to quaternary structure, homodimer.

Its subcellular location is the cytoplasm. The catalysed reaction is tRNA(His) + L-histidine + ATP = L-histidyl-tRNA(His) + AMP + diphosphate + H(+). The polypeptide is Histidine--tRNA ligase (Burkholderia pseudomallei (strain K96243)).